A 307-amino-acid chain; its full sequence is Probable rRNA-processing protein EBP2 homolog (307 aa).

3 disordered regions span residues 1–22 (MSDF…SDAE), 189–208 (QRKM…EAEK), and 236–307 (ESKQ…KGRK). A coiled-coil region spans residues 205-252 (EAEKKDMLDKLKKFRKGKLKNLDFLEDAKALESKQKQSAENRKKRNKK). Basic and acidic residues predominate over residues 236-245 (ESKQKQSAEN). Composition is skewed to basic residues over residues 246–266 (RKKR…KRNT) and 294–307 (RLGK…KGRK).

This sequence belongs to the EBP2 family.

It is found in the nucleus. It localises to the nucleolus. Functionally, required for the processing of the 27S pre-rRNA. The protein is Probable rRNA-processing protein EBP2 homolog of Drosophila melanogaster (Fruit fly).